Here is a 256-residue protein sequence, read N- to C-terminus: Probable S-methyl-5'-thioinosine phosphorylase (256 aa).

Residues threonine 10 and 47 to 48 each bind phosphate; that span reads RH. A substrate-binding site is contributed by methionine 178. Position 179 (threonine 179) interacts with phosphate. A substrate-binding site is contributed by 202–204; that stretch reads NYA.

Belongs to the PNP/MTAP phosphorylase family. MTAP subfamily. In terms of assembly, homotrimer.

The enzyme catalyses S-methyl-5'-thioinosine + phosphate = 5-(methylsulfanyl)-alpha-D-ribose 1-phosphate + hypoxanthine. The protein operates within purine metabolism; purine nucleoside salvage. Its function is as follows. Catalyzes the reversible phosphorylation of S-methyl-5'-thioinosine (MTI) to hypoxanthine and 5-methylthioribose-1-phosphate. Involved in the breakdown of S-methyl-5'-thioadenosine (MTA), a major by-product of polyamine biosynthesis. Catabolism of (MTA) occurs via deamination to MTI and phosphorolysis to hypoxanthine. In Methanopyrus kandleri (strain AV19 / DSM 6324 / JCM 9639 / NBRC 100938), this protein is Probable S-methyl-5'-thioinosine phosphorylase.